The following is a 264-amino-acid chain: Phycocyanobilin:ferredoxin oxidoreductase (264 aa).

It belongs to the HY2 family.

It carries out the reaction (2R,3Z)-phycocyanobilin + 4 oxidized [2Fe-2S]-[ferredoxin] = biliverdin IXalpha + 4 reduced [2Fe-2S]-[ferredoxin] + 4 H(+). Catalyzes the four-electron reduction of biliverdin IX-alpha (2-electron reduction at both the A and D rings); the reaction proceeds via an isolatable 2-electron intermediate, 181,182-dihydrobiliverdin. In Prochlorococcus marinus (strain MIT 9303), this protein is Phycocyanobilin:ferredoxin oxidoreductase.